The primary structure comprises 269 residues: Shikimate dehydrogenase (NADP(+)) (269 aa).

Shikimate is bound by residues Ser17 to Ser19 and Thr64. Catalysis depends on Lys68, which acts as the Proton acceptor. Glu80 is a binding site for NADP(+). Residues Asn89 and Asp105 each coordinate shikimate. NADP(+) is bound by residues Gly130–Ala134, Asn154–Lys159, and Met213. Tyr215 lines the shikimate pocket. Gly237 contacts NADP(+).

Belongs to the shikimate dehydrogenase family. In terms of assembly, homodimer.

It catalyses the reaction shikimate + NADP(+) = 3-dehydroshikimate + NADPH + H(+). Its pathway is metabolic intermediate biosynthesis; chorismate biosynthesis; chorismate from D-erythrose 4-phosphate and phosphoenolpyruvate: step 4/7. Involved in the biosynthesis of the chorismate, which leads to the biosynthesis of aromatic amino acids. Catalyzes the reversible NADPH linked reduction of 3-dehydroshikimate (DHSA) to yield shikimate (SA). The sequence is that of Shikimate dehydrogenase (NADP(+)) from Neisseria flavescens.